A 99-amino-acid polypeptide reads, in one-letter code: Small ribosomal subunit protein bS16 (99 aa).

The tract at residues 80 to 99 (PPRQQNEAKRETAETAQPEA) is disordered.

The protein belongs to the bacterial ribosomal protein bS16 family.

This chain is Small ribosomal subunit protein bS16, found in Thermomicrobium roseum (strain ATCC 27502 / DSM 5159 / P-2).